We begin with the raw amino-acid sequence, 342 residues long: Uroporphyrinogen decarboxylase (342 aa).

Residues 26–30 (RQAGR), aspartate 76, tyrosine 150, serine 205, and histidine 321 each bind substrate.

Belongs to the uroporphyrinogen decarboxylase family. As to quaternary structure, homodimer.

The protein localises to the cytoplasm. It carries out the reaction uroporphyrinogen III + 4 H(+) = coproporphyrinogen III + 4 CO2. Its pathway is porphyrin-containing compound metabolism; protoporphyrin-IX biosynthesis; coproporphyrinogen-III from 5-aminolevulinate: step 4/4. Catalyzes the decarboxylation of four acetate groups of uroporphyrinogen-III to yield coproporphyrinogen-III. The polypeptide is Uroporphyrinogen decarboxylase (Sphingopyxis alaskensis (strain DSM 13593 / LMG 18877 / RB2256) (Sphingomonas alaskensis)).